We begin with the raw amino-acid sequence, 303 residues long: Recombination-associated protein RdgC (303 aa).

Belongs to the RdgC family.

Its subcellular location is the cytoplasm. The protein localises to the nucleoid. May be involved in recombination. In Shewanella frigidimarina (strain NCIMB 400), this protein is Recombination-associated protein RdgC.